Here is a 326-residue protein sequence, read N- to C-terminus: MLKTYHIALACVILAVVVLLFGGESLSLEEWQEVCLNVKNHFLHNEELSSLSVIILEIRLPRVILALLVGASLSGSGVVMQTILRNPLVDPFLLGISSGAMLGVAMAIAVVESNIAILAFFGAILPSLAVLAMNRVLGNSVLSLVLSGVVLSAFLSALAGAIKFFVIPQKAQAIVVWLLGSLSLSSYKDCLIAFIGLSLGFIPLFLLRWRINLLSLSDAQSLSLGINPVLLRSLCLVCVSVASALAVSVSGTIGWIGLVIPHVARLFFGANLQKLLLSSLLMGAFFLLLADVVAKTITPYDLPVGIATSVLGAPFFLWLLFRTRGV.

The next 10 helical transmembrane spans lie at 7–27, 64–84, 91–111, 113–133, 142–162, 164–184, 187–207, 241–261, 275–295, and 301–321; these read IALA…ESLS, ILAL…QTIL, PFLL…IAVV, SNIA…VLAM, LSLV…AGAI, FFVI…SLSL, YKDC…LFLL, VASA…LVIP, LLLS…VVAK, and DLPV…WLLF.

Belongs to the binding-protein-dependent transport system permease family. FecCD subfamily.

Its subcellular location is the cell inner membrane. Its function is as follows. Part of a binding-protein-dependent transport system for an iron chelatin; probably responsible for the translocation of the substrate across the membrane. The protein is Probable iron chelatin transport system permease protein jhp_0822 of Helicobacter pylori (strain J99 / ATCC 700824) (Campylobacter pylori J99).